The primary structure comprises 420 residues: Imidazolonepropionase (420 aa).

Fe(3+) is bound by residues His77 and His79. 2 residues coordinate Zn(2+): His77 and His79. 4-imidazolone-5-propanoate-binding residues include Arg86, Tyr149, and His182. Tyr149 is a binding site for N-formimidoyl-L-glutamate. His245 is a Fe(3+) binding site. His245 lines the Zn(2+) pocket. Residue Glu248 participates in 4-imidazolone-5-propanoate binding. Asp319 serves as a coordination point for Fe(3+). Asp319 contributes to the Zn(2+) binding site. Asn321 is a binding site for N-formimidoyl-L-glutamate.

Belongs to the metallo-dependent hydrolases superfamily. HutI family. It depends on Zn(2+) as a cofactor. Fe(3+) is required as a cofactor.

The protein localises to the cytoplasm. It catalyses the reaction 4-imidazolone-5-propanoate + H2O = N-formimidoyl-L-glutamate. It functions in the pathway amino-acid degradation; L-histidine degradation into L-glutamate; N-formimidoyl-L-glutamate from L-histidine: step 3/3. In terms of biological role, catalyzes the hydrolytic cleavage of the carbon-nitrogen bond in imidazolone-5-propanoate to yield N-formimidoyl-L-glutamate. It is the third step in the universal histidine degradation pathway. The sequence is that of Imidazolonepropionase from Haloarcula marismortui (strain ATCC 43049 / DSM 3752 / JCM 8966 / VKM B-1809) (Halobacterium marismortui).